The primary structure comprises 509 residues: Putative 6-phosphofructo-2-kinase/fructose-2,6-bisphosphatase YLR345W (509 aa).

A Phosphoserine modification is found at S6. Residues 6–291 (SDDEELLNGL…FFLMNLRQKK (286 aa)) are 6-phosphofructo-2-kinase. 90-98 (GLPATSKTL) is an ATP binding site. The active-site Proton donor/acceptor is D173. 212 to 217 (NIALAL) lines the ATP pocket. R237 is a beta-D-fructose 6-phosphate binding site. The tract at residues 292–466 (GCVYFARCGT…IAHESTLRVL (175 aa)) is fructose-2,6-bisphosphatase. R298 is a binding site for beta-D-fructose 2,6-bisphosphate. ATP is bound at residue 415–418 (YKES). Y433 and R464 together coordinate beta-D-fructose 2,6-bisphosphate. 460-464 (ESTLR) serves as a coordination point for ATP.

This sequence in the C-terminal section; belongs to the phosphoglycerate mutase family. In terms of assembly, homodimer.

The protein resides in the cytoplasm. It catalyses the reaction beta-D-fructose 2,6-bisphosphate + H2O = beta-D-fructose 6-phosphate + phosphate. It carries out the reaction beta-D-fructose 6-phosphate + ATP = beta-D-fructose 2,6-bisphosphate + ADP + H(+). Functionally, synthesis and degradation of fructose 2,6-bisphosphate. This Saccharomyces cerevisiae (strain ATCC 204508 / S288c) (Baker's yeast) protein is Putative 6-phosphofructo-2-kinase/fructose-2,6-bisphosphatase YLR345W.